The chain runs to 53 residues: uncharacterized protein (53 aa).

This is an uncharacterized protein from Thermoproteus tenax (TTV1).